We begin with the raw amino-acid sequence, 152 residues long: Urease accessory protein UreE (152 aa).

It belongs to the UreE family.

The protein resides in the cytoplasm. In terms of biological role, involved in urease metallocenter assembly. Binds nickel. Probably functions as a nickel donor during metallocenter assembly. The sequence is that of Urease accessory protein UreE from Enterobacter sp. (strain 638).